The sequence spans 626 residues: Polyphenol oxidase C, chloroplastic (626 aa).

The transit peptide at methionine 1 to alanine 83 directs the protein to the chloroplast. Disulfide bonds link cysteine 94–cysteine 110 and cysteine 109–cysteine 177. The Cu cation site is built by histidine 176, histidine 194, histidine 203, histidine 324, histidine 328, and histidine 366. The 2'-(S-cysteinyl)-histidine (Cys-His) cross-link spans cysteine 180–histidine 194.

Belongs to the tyrosinase family. Cu(2+) serves as cofactor.

Its subcellular location is the plastid. The protein localises to the chloroplast thylakoid lumen. The enzyme catalyses 2 catechol + O2 = 2 1,2-benzoquinone + 2 H2O. Catalyzes the oxidation of mono- and o-diphenols to o-diquinones. The polypeptide is Polyphenol oxidase C, chloroplastic (Solanum lycopersicum (Tomato)).